The sequence spans 481 residues: Protein hedgehog (481 aa).

Cysteine 93 is lipidated: N-palmitoyl cysteine. Positions 157, 158, 163, 193, 194, 197, and 199 each coordinate Ca(2+). Glycine 265 carries Cholesterol glycine ester lipidation.

Belongs to the hedgehog family. As to quaternary structure, interacts with shf. The C-terminal part of the hedgehog protein precursor displays an autoproteolysis activity that results in the cleavage of the full-length protein into two parts (N-product and C-product). In addition, the C-terminal part displays a cholesterol transferase activity that results by the covalent attachment of a cholesterol moiety to the C-terminal of the newly generated N-product. The N-product is the active species in both local and long-range signaling, whereas the C-product has no signaling activity. Post-translationally, cholesterylation is required for N-product targeting to lipid rafts and multimerization. In terms of processing, N-palmitoylation by Rasp of the hedgehog N-product, within the secretory pathway, is required for the embryonic and larval patterning activities of the hedgehog signal.

It is found in the nucleus. It localises to the cytoplasm. The protein localises to the cell membrane. It catalyses the reaction glycyl-L-cysteinyl-[protein] + cholesterol + H(+) = [protein]-C-terminal glycyl cholesterol ester + N-terminal L-cysteinyl-[protein]. Its function is as follows. The C-terminal part of the hedgehog protein precursor displays an autoproteolysis activity that results in the cleavage of the full-length protein into two parts (N-product and C-product). In addition, the C-terminal part displays a cholesterol transferase activity that results by the covalent attachment of a cholesterol moiety to the C-terminal of the newly generated N-product. Once cleaved, the C-product has no signaling activity and diffuses from the cell. The dually lipidated hedgehog protein N-product is a morphogen which is essential for a variety of patterning events during development. Establishes the anterior-posterior axis of the embryonic segments and patterns the larval imaginal disks. Binds to the patched (ptc) receptor, which functions in association with smoothened (smo), to activate the transcription of target genes wingless (wg), decapentaplegic (dpp) and ptc. In the absence of hh, ptc represses the constitutive signaling activity of smo through fused (fu). Essential component of a signaling pathway which regulates the Duox-dependent gut immune response to bacterial uracil; required to activate Cad99C-dependent endosome formation, norpA-dependent Ca2+ mobilization and p38 MAPK, which are essential steps in the Duox-dependent production of reactive oxygen species (ROS) in response to intestinal bacterial infection. During photoreceptor differentiation, it up-regulates transcription of Ubr3, which in turn promotes the hh-signaling pathway by mediating the ubiquitination and degradation of cos. This Drosophila pseudoobscura pseudoobscura (Fruit fly) protein is Protein hedgehog (hh-1).